A 163-amino-acid chain; its full sequence is Iron-sulfur cluster assembly protein 2 (163 aa).

A mitochondrion-targeting transit peptide spans 1–48 (MMMLRQTSRKAYLGLQASPLGLGRRLYHENVIDHFENPRNVGSFNRND).

It belongs to the NifU family. Component of the core Fe-S cluster (ISC) assembly machinery. [2Fe-2S] cluster serves as cofactor. In terms of tissue distribution, mostly expressed in leaves, pollen and flowers.

The protein localises to the mitochondrion matrix. It functions in the pathway cofactor biosynthesis; iron-sulfur cluster biosynthesis. Functionally, scaffold protein for the de novo synthesis of iron-sulfur (Fe-S) clusters within mitochondria, which is required for maturation of both mitochondrial and cytoplasmic [2Fe-2S] and [4Fe-4S] proteins. First, a [2Fe-2S] cluster is transiently assembled on the scaffold protein ISCU (ISU1, ISU2 or ISU3). In a second step, the cluster is released from ISCU, transferred to a glutaredoxin, followed by the formation of mitochondrial [2Fe-2S] proteins, the synthesis of [4Fe-4S] clusters and their target-specific insertion into the recipient apoproteins. Cluster assembly on ISCU depends on the function of the cysteine desulfurase complex NFS1-ISD11, which serves as the sulfur donor for cluster synthesis, the iron-binding protein frataxin as the putative iron donor, and the electron transfer chain comprised of ferredoxin reductase and ferredoxin, which receive their electrons from NADH. The sequence is that of Iron-sulfur cluster assembly protein 2 (ISU2) from Arabidopsis thaliana (Mouse-ear cress).